Reading from the N-terminus, the 406-residue chain is Trk system potassium uptake protein trkA homolog 1 (406 aa).

The 124-residue stretch at 1-124 folds into the RCK N-terminal 1 domain; the sequence is MKAVIIGAGE…RAQVGVDLMI (124 aa). Residues 7 to 11, D29, 70 to 71, and R101 each bind NAD(+); these read GAGEV and TG. The region spanning 144–225 is the RCK C-terminal domain; that stretch reads IDAEMFAEGK…MEDLESVFGS (82 aa). The 119-residue stretch at 230 to 348 folds into the RCK N-terminal 2 domain; the sequence is RTRILLIGCG…FEMVGIDMAV (119 aa). 232–262 contributes to the NAD(+) binding site; sequence RILLIGCGIVGMYLAKLIDKEENADLRIIEH.

Part of a potassium transport system. This is Trk system potassium uptake protein trkA homolog 1 (trkA1) from Methanosarcina mazei (Methanosarcina frisia).